The following is a 746-amino-acid chain: EF-hand domain-containing family member C2 (746 aa).

DM10 domains lie at 75–182, 226–367, and 429–536; these read DKQV…RKMG, DGHV…RTKY, and ESNT…EKHA. Residues 557-592 form the EF-hand domain; sequence PRSREIRQVFAAADPQHTKVIEYDPFRNLIVSITDG.

Its subcellular location is the cytoplasm. The protein resides in the cytoskeleton. It localises to the cilium axoneme. In terms of biological role, microtubule inner protein (MIP) part of the dynein-decorated doublet microtubules (DMTs) in cilia axoneme, which is required for motile cilia beating. This Gallus gallus (Chicken) protein is EF-hand domain-containing family member C2 (EFHC2).